The primary structure comprises 927 residues: MHQQPRGPARVSSPGATTQPNLPSRSNSTREAALGSRPRAGSNLVGRDVPNSPSLESPPIPAPPADSVRKLDQIIQNFYAKAAVLVLDSRIKSRPARGANGARKPNKWFQIETDEIDDFRDELKIWKNCGSLDNRPPPMVIEVYLDASRLKDSQSLVIVDENGKRWDVMEQLNSYGSSTDSSGASRRNNEVVIERWQVELKHSGMTSVDFGPILPTVYKKAIVFFRSLFITTRLLPAWKFASQGAAKNSHPALIPRCRIRLSQPDRPRYDQLRLPIDGRPDPVTEYVFGDLEVPVGRLSTLVTYRSDCNFRVDDSEALLSSRFMGVDENFFRPSLPQQHATSRAPAAEAGSLRDHRSKPNLNDIQQAYGSLSTFHGNVPIGTSPISALRSVRQPGSDTSSPPESIPAQHDVGGPSSLPVRQGTARPHLPALEGLGRRPSVSFQPFKAGSLSGSPVPRQLDAEPASPQSLTRPGIPSLRQAGNRTSLTAGMPASLRGGPPTSSGETAVAGSPRPASTSRYSSSFTHRRGRLSFGGASKAGDDEQGSSGRQSLASSVAQPGSGLLAEVAGTSSESLRDDNEQLEDFIKALDSKKTLQSFGPSKTGESATNKTVAQLSRFHMMRDSNNALTESMTSSVQMQRSSSSSSRQLTSVPGMTAPASVSASSSPGKPLSPHTPHTPAIPSRLSENSIIDYSGQGRITSRQGRTSDNTQPGTIRENTITQDGTTAIDIPLSPRLATYQRRASSVAIQNRSMADDDDTDSAFAHRSISLGADDREPPTLSILLGRQMQLEEDSTQRPSDRLEPAADTGSTETPDMLRQGLSEENPPEGLIPAATSSSPFGRRRYMGMASHKQTPPQSSRGSFNGSLNRQVRGDDDSVNEEPLVFDLSEMDPQGRRSIEEARSGASGGPNIGPDRGGYESRNASRRGW.

Disordered stretches follow at residues 1–66 (MHQQ…PPAD), 334–359 (SLPQQHATSRAPAAEAGSLRDHRSKP), 388–559 (LRSV…AQPG), 628–716 (TESM…TIRE), and 786–927 (QMQL…RRGW). Polar residues predominate over residues 14-30 (PGATTQPNLPSRSNSTR). Composition is skewed to polar residues over residues 393 to 402 (QPGSDTSSPP), 513 to 523 (PASTSRYSSSF), and 544 to 557 (GSSGRQSLASSVAQ). Positions 630-671 (SMTSSVQMQRSSSSSSRQLTSVPGMTAPASVSASSSPGKPLS) are enriched in low complexity. A compositionally biased stretch (polar residues) spans 684 to 716 (LSENSIIDYSGQGRITSRQGRTSDNTQPGTIRE). The segment covering 793–803 (STQRPSDRLEP) has biased composition (basic and acidic residues). Residues 850–868 (HKQTPPQSSRGSFNGSLNR) show a composition bias toward polar residues. Positions 891–901 (PQGRRSIEEAR) are enriched in basic and acidic residues.

It belongs to the ATG13 family. Fungi subfamily. In terms of assembly, hypophosphorylated form interacts with ATG1 to form the ATG1-ATG13 kinase complex. The ATG1-ATG13 complex interacts with the ATG17-ATG29-ATG31 complex through direct interaction with ATG17.

The protein localises to the cytoplasm. The protein resides in the preautophagosomal structure. Its function is as follows. Activates the ATG1 kinase in a nutritional condition dependent manner through the TOR pathway, leading to autophagy. Involved in ATG9 and ATG23 cycling through the pre-autophagosomal structure. Also involved in cytoplasm to vacuole transport (Cvt) and more specifically in Cvt vesicle formation. Seems to play a role in the switching machinery regulating the conversion between the Cvt pathway and autophagy. Finally, ATG13 is also required for glycogen storage during stationary phase. Autophagy is required for proper vegetative growth, asexual/sexual reproduction, and full virulence. Autophagy is particularly involved in the biosynthesis of deoxynivalenol (DON), an important virulence determinant. This is Autophagy-related protein 13 from Gibberella zeae (strain ATCC MYA-4620 / CBS 123657 / FGSC 9075 / NRRL 31084 / PH-1) (Wheat head blight fungus).